The primary structure comprises 52 residues: Teratocyte protein CftICK-I (52 aa).

The N-terminal stretch at 1-19 (MYKLCILFLVVIFAVMAIA) is a signal peptide. 3 disulfides stabilise this stretch: C22–C37, C29–C41, and C36–C51.

Abundantly expressed by teratocytes, which are extra-embryonic cells released by parasitoid wasps into their hosts during larval eclosion.

It localises to the secreted. Its function is as follows. This endoparasitoid wasp peptide has immununosuppressive, antimicrobial and insecticidal activities. Suppress cellular immunity which is detectable as a reduction of hemocyte encapsulation in the host. Shows potent antifungal activity against C.albicans (MIC~0.25 ug/ml). In vivo, ingestion of this peptide (probably at excessive doses) increases larval mortality and reduces leaf consumption of D.saccharalis, a permissive host for C.flavipes. This Cotesia flavipes (Parasitic wasp) protein is Teratocyte protein CftICK-I.